The following is a 577-amino-acid chain: Insulin-like growth factor 2 mRNA-binding protein 1 (577 aa).

2 RRM domains span residues 2–75 and 81–156; these read NKLY…HSVP and RKIQ…YIPD. Phosphoserine occurs at positions 12 and 73. The interval 160–190 is disordered; that stretch reads AQGPENGRRGGFGSRGQPRQGSPVAAGAPAK. Serine 181 carries the phosphoserine modification. KH domains follow at residues 195 to 260, 276 to 343, 405 to 470, and 487 to 553; these read DIPL…CKMI, EVPL…EQEI, QEMV…QGRI, and KLET…QRKI. The segment at 310–324 is sufficient for nuclear export; that stretch reads ITISSLQDLTLYNPE. The interval 485 to 495 is sufficient for nuclear export; it reads EVKLETHIRVP. Residue threonine 528 is modified to Phosphothreonine.

It belongs to the RRM IMP/VICKZ family. As to quaternary structure, can form homodimers and heterodimers with IGF2BP1 and IGF2BP3. Component of the coding region determinant (CRD)-mediated complex, composed of DHX9, HNRNPU, IGF2BP1, SYNCRIP and YBX1. During HCV infection, identified in a HCV IRES-mediated translation complex, at least composed of EIF3C, IGF2BP1, RPS3 and HCV RNA-replicon. Interacts (via the KH domains) with HIV-1 GAG (via the second zinc finger motif of NC). Associates (via the RRM domains and KH domains) with HIV-1 particles. Identified in a mRNP complex, composed of at least DHX9, DDX3X, ELAVL1, HNRNPU, IGF2BP1, ILF3, PABPC1, PCBP2, PTBP2, STAU1, STAU2, SYNCRIP and YBX1. Identified in a IGF2BP1-dependent mRNP granule complex containing untranslated mRNAs. Interacts with DHX9, ELAVL2, HNRNPA2B1, HNRNPC, HNRNPH1, HNRNPU, IGF2BP2, ILF2, and YBX1. Interacts with FMR1. Component of a multisubunit autoregulatory RNP complex (ARC), at least composed of IGF2BP1, PABPC1 and CSDE1/UNR. Directly interacts with PABPC1. Component of a TAU mRNP complex, at least composed of IGF2BP1, ELAVL4 and G3BP. Interacts with ELAVL4 in an RNA-dependent manner. Associates with microtubules and polysomes. Interacts with AGO1 and AGO2. Interacts with ELAVL1 and MATR3. Interacts (via KH3 and KH4 domains) with SEPIN14P20 peptide RBRP; the interaction results in increased binding of IGF2BP1 to N6-methyladenosine (m6A)-containing mRNAs. Phosphorylated at Ser-181 by mTORC2 cotranslationally, promoting binding to the 3'-UTR of IGF2 mRNA. Mainly expressed in the embryo, including in fetal liver, fetal lung, fetal kidney, fetal thymus (at protein level). Also expressed follicles of ovary, as well as in gonocytes of testis, spermatogonia, semen, oocytes and placenta (at protein level). Expressed in various cancers, including testis and lung cancers (at protein level), as well as kidney, prostate and trachea cancers.

The protein localises to the nucleus. The protein resides in the cytoplasm. Its subcellular location is the perinuclear region. It localises to the P-body. It is found in the stress granule. The protein localises to the cell projection. The protein resides in the lamellipodium. Its subcellular location is the dendrite. It localises to the dendritic spine. It is found in the growth cone. The protein localises to the filopodium. The protein resides in the axon. Functionally, RNA-binding factor that recruits target transcripts to cytoplasmic protein-RNA complexes (mRNPs). This transcript 'caging' into mRNPs allows mRNA transport and transient storage. It also modulates the rate and location at which target transcripts encounter the translational apparatus and shields them from endonuclease attacks or microRNA-mediated degradation. Preferentially binds to N6-methyladenosine (m6A)-containing mRNAs and increases their stability. Plays a direct role in the transport and translation of transcripts required for axonal regeneration in adult sensory neurons. Regulates localized beta-actin/ACTB mRNA translation, a crucial process for cell polarity, cell migration and neurite outgrowth. Co-transcriptionally associates with the ACTB mRNA in the nucleus. This binding involves a conserved 54-nucleotide element in the ACTB mRNA 3'-UTR, known as the 'zipcode'. The RNP thus formed is exported to the cytoplasm, binds to a motor protein and is transported along the cytoskeleton to the cell periphery. During transport, prevents ACTB mRNA from being translated into protein. When the RNP complex reaches its destination near the plasma membrane, IGF2BP1 is phosphorylated. This releases the mRNA, allowing ribosomal 40S and 60S subunits to assemble and initiate ACTB protein synthesis. Monomeric ACTB then assembles into the subcortical actin cytoskeleton. During neuronal development, key regulator of neurite outgrowth, growth cone guidance and neuronal cell migration, presumably through the spatiotemporal fine tuning of protein synthesis, such as that of ACTB. May regulate mRNA transport to activated synapses. Binds to and stabilizes ABCB1/MDR-1 mRNA. During interstinal wound repair, interacts with and stabilizes PTGS2 transcript. PTGS2 mRNA stabilization may be crucial for colonic mucosal wound healing. Binds to the 3'-UTR of IGF2 mRNA by a mechanism of cooperative and sequential dimerization and regulates IGF2 mRNA subcellular localization and translation. Binds to MYC mRNA, in the coding region instability determinant (CRD) of the open reading frame (ORF), hence preventing MYC cleavage by endonucleases and possibly microRNA targeting to MYC-CRD. Binding to MYC mRNA is enhanced by m6A-modification of the CRD. Binds to the 3'-UTR of CD44 mRNA and stabilizes it, hence promotes cell adhesion and invadopodia formation in cancer cells. Binds to the oncofetal H19 transcript and to the neuron-specific TAU mRNA and regulates their localizations. Binds to and stabilizes BTRC/FBW1A mRNA. Binds to the adenine-rich autoregulatory sequence (ARS) located in PABPC1 mRNA and represses its translation. PABPC1 mRNA-binding is stimulated by PABPC1 protein. Prevents BTRC/FBW1A mRNA degradation by disrupting microRNA-dependent interaction with AGO2. Promotes the directed movement of tumor-derived cells by fine-tuning intracellular signaling networks. Binds to MAPK4 3'-UTR and inhibits its translation. Interacts with PTEN transcript open reading frame (ORF) and prevents mRNA decay. This combined action on MAPK4 (down-regulation) and PTEN (up-regulation) antagonizes HSPB1 phosphorylation, consequently it prevents G-actin sequestration by phosphorylated HSPB1, allowing F-actin polymerization. Hence enhances the velocity of cell migration and stimulates directed cell migration by PTEN-modulated polarization. Interacts with Hepatitis C virus (HCV) 5'-UTR and 3'-UTR and specifically enhances translation at the HCV IRES, but not 5'-cap-dependent translation, possibly by recruiting eIF3. Interacts with HIV-1 GAG protein and blocks the formation of infectious HIV-1 particles. Reduces HIV-1 assembly by inhibiting viral RNA packaging, as well as assembly and processing of GAG protein on cellular membranes. During cellular stress, such as oxidative stress or heat shock, stabilizes target mRNAs that are recruited to stress granules, including CD44, IGF2, MAPK4, MYC, PTEN, RAPGEF2 and RPS6KA5 transcripts. This chain is Insulin-like growth factor 2 mRNA-binding protein 1 (IGF2BP1), found in Homo sapiens (Human).